A 564-amino-acid chain; its full sequence is Beta-hexosaminidase subunit B2 (564 aa).

The N-terminal stretch at 1-19 is a signal peptide; the sequence is MKLKFIFLILFFIIGNSIG. Residues Asn-43, Asn-84, Asn-303, and Asn-347 are each glycosylated (N-linked (GlcNAc...) asparagine). The Proton donor role is filled by Glu-357. N-linked (GlcNAc...) asparagine glycosylation is found at Asn-364, Asn-377, Asn-439, Asn-524, and Asn-551.

It belongs to the glycosyl hydrolase 20 family.

Its subcellular location is the lysosome. The enzyme catalyses Hydrolysis of terminal non-reducing N-acetyl-D-hexosamine residues in N-acetyl-beta-D-hexosaminides.. In terms of biological role, responsible for the degradation of GM2 gangliosides, and a variety of other molecules containing terminal N-acetyl hexosamines. The protein is Beta-hexosaminidase subunit B2 (hexb2) of Dictyostelium discoideum (Social amoeba).